Consider the following 284-residue polypeptide: MADAKAVAKAELKSKDFVPRGNKSSSPLNTTLYLGLRALDCYIQYLILSRATGSFIIKFFGGSIIPHGPPVEAGFMHIEKLGLSGYRLLLLFMDILAAAKHFWFVLTVAEEAWTLTGAIVVGLDNIFFDTLNNLLFLCAATSAASSKAGGETLANPYLATGFIIFAVGLVTECVCEIDRKVFKKNPMNKGKPYTGGLFSLVRHPNYTAFTIWRSGLALASGGMIYGMSIAMFFMWDFSNRAVPALDEYCTKRVSYGPRDSTSTNWSRIWLLMTSSLVRRYVGRV.

Residues Asn-22 and Asn-29 are each glycosylated (N-linked (GlcNAc...) asparagine). 2 helical membrane passes run 88 to 108 (LLLL…VLTV) and 157 to 177 (YLAT…VCEI). The N-linked (GlcNAc...) asparagine glycan is linked to Asn-205. The chain crosses the membrane as a helical span at residues 215–235 (GLALASGGMIYGMSIAMFFMW). A glycan (N-linked (GlcNAc...) asparagine) is linked at Asn-264.

The protein belongs to the class VI-like SAM-binding methyltransferase superfamily. Isoprenylcysteine carboxyl methyltransferase family.

Its subcellular location is the membrane. Its pathway is secondary metabolite biosynthesis. Probable O-methyltransferase; part of the gene cluster that mediates the biosynthesis of ustilaginoidins, dimeric gamma-naphthopyrones isolated from different fungal species. The first step in the biosynthesis of ustilaginoidins is the production of gamma-naphthopyrone precursor YWA1 by the non-reducing polyketide synthase ustP, via condensation of one acetyl-CoA starter unit with 6 malonyl-CoA units. YWA1 is then probably substrate of the ustZ to yield norrubrofusarin via a dehydration reaction. A key enzyme in the biosynthetic pathway is the laccase ustL, which catalyzes the oxidative dimerization of norrubrofusarin to ustilaginoidin A. It can produce the M- and P-atropisomers in varying amounts, depending on the reaction conditions. For the biosynthesis of 3-methylustilaginoid in derivatives such as chaetochromin A, a methylated derivative of YWA1 is required. The C-methylation is considered to be catalyzed by ustM, the phosphopantetheine attachment site of which indicates that it acts on the growing polyketide chain before release of the product. For the biosynthesis of chaetochromin A, it is assumed that saturation of the D2 double bond takes place before dimerization, and is probably catalyzed by an external reductase because no candidate gene was identified within the cluster. In Ustilaginoidea virens (Rice false smut fungus), this protein is Probable O-methyltransferase ustE.